The sequence spans 446 residues: Na(+)-translocating NADH-quinone reductase subunit A (446 aa).

The protein belongs to the NqrA family. As to quaternary structure, composed of six subunits; NqrA, NqrB, NqrC, NqrD, NqrE and NqrF.

The enzyme catalyses a ubiquinone + n Na(+)(in) + NADH + H(+) = a ubiquinol + n Na(+)(out) + NAD(+). Functionally, NQR complex catalyzes the reduction of ubiquinone-1 to ubiquinol by two successive reactions, coupled with the transport of Na(+) ions from the cytoplasm to the periplasm. NqrA to NqrE are probably involved in the second step, the conversion of ubisemiquinone to ubiquinol. This chain is Na(+)-translocating NADH-quinone reductase subunit A, found in Histophilus somni (strain 129Pt) (Haemophilus somnus).